Reading from the N-terminus, the 632-residue chain is Threonine--tRNA ligase (632 aa).

Residues 1–61 (MPIITLPDGT…KTDANLAIIT (61 aa)) form the TGS domain. The catalytic stretch occupies residues 242-533 (DHRKIGKIQD…LIEHYEGAYP (292 aa)). Residues Cys333, His384, and His510 each contribute to the Zn(2+) site.

This sequence belongs to the class-II aminoacyl-tRNA synthetase family. In terms of assembly, homodimer. Zn(2+) serves as cofactor.

The protein localises to the cytoplasm. The enzyme catalyses tRNA(Thr) + L-threonine + ATP = L-threonyl-tRNA(Thr) + AMP + diphosphate + H(+). In terms of biological role, catalyzes the attachment of threonine to tRNA(Thr) in a two-step reaction: L-threonine is first activated by ATP to form Thr-AMP and then transferred to the acceptor end of tRNA(Thr). Also edits incorrectly charged L-seryl-tRNA(Thr). In Ruthia magnifica subsp. Calyptogena magnifica, this protein is Threonine--tRNA ligase.